We begin with the raw amino-acid sequence, 344 residues long: Putative 2-hydroxyacid dehydrogenase YoaD (344 aa).

An NAD(+)-binding site is contributed by Asp-193. Arg-251 is a catalytic residue. Asp-275 serves as a coordination point for NAD(+). The active site involves Glu-280. The active-site Proton donor is His-300.

This sequence belongs to the D-isomer specific 2-hydroxyacid dehydrogenase family.

This Bacillus subtilis (strain 168) protein is Putative 2-hydroxyacid dehydrogenase YoaD (yoaD).